Here is a 105-residue protein sequence, read N- to C-terminus: Large ribosomal subunit protein bL21 (105 aa).

This sequence belongs to the bacterial ribosomal protein bL21 family. As to quaternary structure, part of the 50S ribosomal subunit. Contacts protein L20.

In terms of biological role, this protein binds to 23S rRNA in the presence of protein L20. In Dictyoglomus thermophilum (strain ATCC 35947 / DSM 3960 / H-6-12), this protein is Large ribosomal subunit protein bL21.